The following is a 302-amino-acid chain: N-acetylmuramic acid 6-phosphate etherase (302 aa).

Positions 57–220 (VSEKLKNNGR…TTAVMIKLGK (164 aa)) constitute an SIS domain. Glutamate 85 functions as the Proton donor in the catalytic mechanism. The active site involves glutamate 116.

This sequence belongs to the GCKR-like family. MurNAc-6-P etherase subfamily. Homodimer.

The catalysed reaction is N-acetyl-D-muramate 6-phosphate + H2O = N-acetyl-D-glucosamine 6-phosphate + (R)-lactate. Its pathway is amino-sugar metabolism; N-acetylmuramate degradation. Specifically catalyzes the cleavage of the D-lactyl ether substituent of MurNAc 6-phosphate, producing GlcNAc 6-phosphate and D-lactate. The sequence is that of N-acetylmuramic acid 6-phosphate etherase from Clostridium acetobutylicum (strain ATCC 824 / DSM 792 / JCM 1419 / IAM 19013 / LMG 5710 / NBRC 13948 / NRRL B-527 / VKM B-1787 / 2291 / W).